Consider the following 359-residue polypeptide: DNA polymerase IV (359 aa).

The UmuC domain maps to Ile4–Gly185. Asp8 and Asp103 together coordinate Mg(2+). Glu104 is a catalytic residue.

This sequence belongs to the DNA polymerase type-Y family. As to quaternary structure, monomer. It depends on Mg(2+) as a cofactor.

It localises to the cytoplasm. The catalysed reaction is DNA(n) + a 2'-deoxyribonucleoside 5'-triphosphate = DNA(n+1) + diphosphate. In terms of biological role, poorly processive, error-prone DNA polymerase involved in untargeted mutagenesis. Copies undamaged DNA at stalled replication forks, which arise in vivo from mismatched or misaligned primer ends. These misaligned primers can be extended by PolIV. Exhibits no 3'-5' exonuclease (proofreading) activity. May be involved in translesional synthesis, in conjunction with the beta clamp from PolIII. This is DNA polymerase IV from Shewanella sp. (strain MR-4).